Here is a 187-residue protein sequence, read N- to C-terminus: Apolipophorin-3 (187 aa).

The first 17 residues, M1 to A17, serve as a signal peptide directing secretion. The propeptide occupies S18 to R22.

It belongs to the insect apolipophorin-3 family. As to quaternary structure, equilibrium between a soluble monomer and a bound lipoprotein form. Apolipophorin-3 associates with lipophorin during lipid loading until each particle contains 9 or 14 molecules of apolipophorin-3. Hemolymph.

The protein resides in the secreted. Its function is as follows. Assists in the loading of diacylglycerol, generated from triacylglycerol stores in the fat body through the action of adipokinetic hormone, into lipophorin, the hemolymph lipoprotein. It increases the lipid carrying capacity of lipophorin by covering the expanding hydrophobic surface resulting from diacylglycerol uptake. It thus plays a critical role in the transport of lipids during flight in several species of insects. The protein is Apolipophorin-3 of Hyphantria cunea (Fall webworm moth).